The chain runs to 549 residues: DDB1- and CUL4-associated factor 11 (549 aa).

Low complexity predominate over residues 1–24 (MGSRNSSSAGSGSLEPSEGLSRRG). The disordered stretch occupies residues 1–40 (MGSRNSSSAGSGSLEPSEGLSRRGAGLRRSEEEEEEDEDV). Phosphoserine occurs at positions 73 and 75. The span at 80-89 (DSAWDGRLGD) shows a compositional bias: basic and acidic residues. The interval 80-100 (DSAWDGRLGDRYNPPVDATPD) is disordered. WD repeat units follow at residues 170–210 (TYSQ…HKFK), 216–258 (DVGW…TALD), 263–302 (ERRFAVFSIAVSSDGREVLGGANDGCLYVFDREQNRRTLQ), 305–345 (SHED…EDDP), 353–392 (GHQDGITFIDSKGDARYLISNSKDQTIKLWDIRRFSSREG), 435–480 (GVLH…KKLT), and 481–520 (NHKACVRDVSWHPFEEKIVSSSWDGSLRLWQYRQAEYFQD).

In terms of assembly, interacts with DDB1 and CUL4A.

Its pathway is protein modification; protein ubiquitination. May function as a substrate receptor for CUL4-DDB1 E3 ubiquitin-protein ligase complex. The chain is DDB1- and CUL4-associated factor 11 (Dcaf11) from Rattus norvegicus (Rat).